Consider the following 359-residue polypeptide: E2F transcription factor-like E2FD (359 aa).

DNA-binding regions lie at residues 13-78 and 138-217; these read RKDK…SWKG and RKER…RWLG. Disordered regions lie at residues 255-274 and 288-313; these read RNKSGCSKEDSKRNGNQNTS and DVKNFASGSSTPAGTSESNDMGNNIR. Positions 293 to 309 are enriched in polar residues; sequence ASGSSTPAGTSESNDMG.

Belongs to the E2F/DP family. Monomer. No interactions with DPA or E2FA. In terms of tissue distribution, preferentially expressed in proliferating tissues. Highly expressed in young stalk and young flowers. Lower expression in young leaves and mature flowers. Detected in cotyledonary vascular tissues, the shoot apical meristem, the base of trichomes, the fully developed stomata, the central root cylinder and in the columella of lateral roots but not in the primary root tips or in the leaf epidermal cells.

It localises to the nucleus. In terms of biological role, inhibitor of E2F-dependent regulation of gene expression. Binds specifically the E2 recognition site as a monomer without interacting with DP proteins. May be up-regulating E2FA and down-regulating repressors of cell cycle progression. Promotes cell proliferation and represses cell elongation. Regulated by proteolysis via a ubiquitin-proteasome pathway. The polypeptide is E2F transcription factor-like E2FD (E2FD) (Arabidopsis thaliana (Mouse-ear cress)).